A 76-amino-acid chain; its full sequence is Brevinin-2ISb (76 aa).

Positions 1–22 (MFTMKKSLLVLFFLGTISLSLC) are cleaved as a signal peptide. Residues 23-41 (QEERNADEEDGGEATEEEV) constitute a propeptide, removed in mature form. Cys-70 and Cys-76 are disulfide-bonded.

Expressed by the skin glands.

It localises to the secreted. In terms of biological role, has antimicrobial activity against Gram-negative bacterium E.coli ATCC 8739 (MIC=12.5 ug), against Gram positive bacteria S.aureus ATCC 6538 (MIC=6.3 ug) and B.subtilis ATCC 6633 (MIC=25 ug). Has no activity against methicillin-resistant S.aureus ATCC 43300 (MIC= ug) and fungus C.albicans ATCC 90028. This is Brevinin-2ISb from Odorrana ishikawae (Ishikawa's frog).